Reading from the N-terminus, the 381-residue chain is UDP-4-amino-4-deoxy-L-arabinose--oxoglutarate aminotransferase (381 aa).

An N6-(pyridoxal phosphate)lysine modification is found at Lys-182.

Belongs to the DegT/DnrJ/EryC1 family. ArnB subfamily. In terms of assembly, homodimer. Pyridoxal 5'-phosphate serves as cofactor.

The catalysed reaction is UDP-4-amino-4-deoxy-beta-L-arabinose + 2-oxoglutarate = UDP-beta-L-threo-pentopyranos-4-ulose + L-glutamate. It participates in nucleotide-sugar biosynthesis; UDP-4-deoxy-4-formamido-beta-L-arabinose biosynthesis; UDP-4-deoxy-4-formamido-beta-L-arabinose from UDP-alpha-D-glucuronate: step 2/3. Its pathway is bacterial outer membrane biogenesis; lipopolysaccharide biosynthesis. Its function is as follows. Catalyzes the conversion of UDP-4-keto-arabinose (UDP-Ara4O) to UDP-4-amino-4-deoxy-L-arabinose (UDP-L-Ara4N). The modified arabinose is attached to lipid A and is required for resistance to polymyxin and cationic antimicrobial peptides. The chain is UDP-4-amino-4-deoxy-L-arabinose--oxoglutarate aminotransferase from Edwardsiella ictaluri (strain 93-146).